A 336-amino-acid chain; its full sequence is F420-dependent glucose-6-phosphate dehydrogenase (336 aa).

Residue Asp40 participates in coenzyme F420-(gamma-Glu)n binding. His41 acts as the Proton donor in catalysis. Coenzyme F420-(gamma-Glu)n is bound by residues Thr77 and 108-109; that span reads TG. The active-site Proton acceptor is the Glu110. Coenzyme F420-(gamma-Glu)n contacts are provided by residues Asn113, 176–177, and 179–180; these read SG and AA. Substrate is bound by residues Thr194, Lys197, Lys258, and Arg282.

Belongs to the F420-dependent glucose-6-phosphate dehydrogenase family. Homodimer.

It carries out the reaction oxidized coenzyme F420-(gamma-L-Glu)(n) + D-glucose 6-phosphate + H(+) = 6-phospho-D-glucono-1,5-lactone + reduced coenzyme F420-(gamma-L-Glu)(n). Functionally, catalyzes the coenzyme F420-dependent oxidation of glucose 6-phosphate (G6P) to 6-phosphogluconolactone. This is F420-dependent glucose-6-phosphate dehydrogenase from Microbacterium testaceum (strain StLB037).